Here is a 438-residue protein sequence, read N- to C-terminus: Glycosyl hydrolase family 109 protein (438 aa).

The segment at residues 1–33 is a signal peptide (tat-type signal); that stretch reads MDKTSRRDLLKLASLAGIGAGLARSQGSSKSMA. Residues 52 to 53, aspartate 74, 125 to 128, 145 to 146, and asparagine 174 contribute to the NAD(+) site; these read GR, WVWH, and EV. Substrate-binding positions include tyrosine 203, arginine 221, 233 to 236, and tyrosine 315; that span reads YPTH. An NAD(+)-binding site is contributed by tyrosine 233. The tract at residues 408–438 is disordered; the sequence is GPLSEASVANGSAPQKFPDFTRGKWQTRQPV.

The protein belongs to the Gfo/Idh/MocA family. Glycosyl hydrolase 109 subfamily. It depends on NAD(+) as a cofactor. Predicted to be exported by the Tat system. The position of the signal peptide cleavage has not been experimentally proven.

In terms of biological role, glycosidase. This is Glycosyl hydrolase family 109 protein from Solibacter usitatus (strain Ellin6076).